The sequence spans 617 residues: Dihydroxy-acid dehydratase (617 aa).

Asp-82 is a Mg(2+) binding site. Cys-123 is a binding site for [2Fe-2S] cluster. Mg(2+)-binding residues include Asp-124 and Lys-125. Lys-125 carries the N6-carboxylysine modification. A [2Fe-2S] cluster-binding site is contributed by Cys-197. Glu-497 serves as a coordination point for Mg(2+). Ser-523 acts as the Proton acceptor in catalysis.

Belongs to the IlvD/Edd family. In terms of assembly, homodimer. The cofactor is [2Fe-2S] cluster. It depends on Mg(2+) as a cofactor.

It catalyses the reaction (2R)-2,3-dihydroxy-3-methylbutanoate = 3-methyl-2-oxobutanoate + H2O. The enzyme catalyses (2R,3R)-2,3-dihydroxy-3-methylpentanoate = (S)-3-methyl-2-oxopentanoate + H2O. The protein operates within amino-acid biosynthesis; L-isoleucine biosynthesis; L-isoleucine from 2-oxobutanoate: step 3/4. It functions in the pathway amino-acid biosynthesis; L-valine biosynthesis; L-valine from pyruvate: step 3/4. In terms of biological role, functions in the biosynthesis of branched-chain amino acids. Catalyzes the dehydration of (2R,3R)-2,3-dihydroxy-3-methylpentanoate (2,3-dihydroxy-3-methylvalerate) into 2-oxo-3-methylpentanoate (2-oxo-3-methylvalerate) and of (2R)-2,3-dihydroxy-3-methylbutanoate (2,3-dihydroxyisovalerate) into 2-oxo-3-methylbutanoate (2-oxoisovalerate), the penultimate precursor to L-isoleucine and L-valine, respectively. In Streptomyces coelicolor (strain ATCC BAA-471 / A3(2) / M145), this protein is Dihydroxy-acid dehydratase.